A 629-amino-acid chain; its full sequence is tRNA uridine 5-carboxymethylaminomethyl modification enzyme MnmG (629 aa).

4-9 (GGGHAG) serves as a coordination point for FAD. 268 to 282 (GPRYCPSIEDKVNRF) lines the NAD(+) pocket.

Belongs to the MnmG family. As to quaternary structure, homodimer. Heterotetramer of two MnmE and two MnmG subunits. Requires FAD as cofactor.

The protein resides in the cytoplasm. Its function is as follows. NAD-binding protein involved in the addition of a carboxymethylaminomethyl (cmnm) group at the wobble position (U34) of certain tRNAs, forming tRNA-cmnm(5)s(2)U34. The sequence is that of tRNA uridine 5-carboxymethylaminomethyl modification enzyme MnmG from Helicobacter hepaticus (strain ATCC 51449 / 3B1).